A 211-amino-acid chain; its full sequence is Mitotic spindle assembly checkpoint protein MAD2B (211 aa).

The 191-residue stretch at 13 to 203 (QVVADILCEF…SDILKMQLYV (191 aa)) folds into the HORMA domain.

Homooligomer. Interacts with rev1. Interacts with rev3l. Interacts with fzr1 (in complex with the anaphase promoting complex APC). May interact with cdc20.

It is found in the nucleus. The protein localises to the cytoplasm. Its subcellular location is the cytoskeleton. It localises to the spindle. Its function is as follows. Adapter protein able to interact with different proteins and involved in different biological processes. Mediates the interaction between the error-prone DNA polymerase zeta catalytic subunit rev3l and the inserter polymerase rev1, thereby mediating the second polymerase switching in translesion DNA synthesis. Translesion DNA synthesis releases the replication blockade of replicative polymerases, stalled in presence of DNA lesions. May also play a role in signal transduction in response to DNA damage. May regulate the activation of the anaphase promoting complex APC thereby regulating progression through the cell cycle. Through transcriptional regulation may play a role in epithelial-mesenchymal transdifferentiation. Inhibits the fzr1-APC complex activity during mitosis. Plays a role in progression of mitosis. This Xenopus laevis (African clawed frog) protein is Mitotic spindle assembly checkpoint protein MAD2B (mad2l2).